The chain runs to 470 residues: Putative F-box/LRR-repeat protein At3g58920 (470 aa).

Residues 1 to 53 (MDRISNLPNEIICHIVSFLSAKEAAFASVLSKRWQNLFTIVQKLEFDDSVKNQ) form the F-box domain. 6 LRR repeats span residues 114 to 142 (KLEI…KLTS), 143 to 170 (CIFA…FLKS), 173 to 198 (FSDL…TIYD), 225 to 250 (FTYF…KYID), 287 to 312 (EDDP…HLST), and 342 to 367 (YECF…MIKG).

This Arabidopsis thaliana (Mouse-ear cress) protein is Putative F-box/LRR-repeat protein At3g58920.